Reading from the N-terminus, the 413-residue chain is RING-H2 finger protein ATL54 (413 aa).

A helical membrane pass occupies residues 83 to 103; sequence ISIITITGAVLAILLTGFFLV. Residues 177-219 form an RING-type; atypical zinc finger; that stretch reads CPVCLNEFEEDESLRLLPKCNHAFHISCIDTWLSSHTNCPLCR. 2 disordered regions span residues 238–258 and 321–413; these read VTPGGSGSHLENDGVDEEDHG and THVE…VFPL. Positions 387 to 401 are enriched in low complexity; that stretch reads SSSTLKTNGSSSSVS. A compositionally biased stretch (polar residues) spans 402 to 413; sequence CFNKNKSSVFPL.

Belongs to the RING-type zinc finger family. ATL subfamily.

The protein resides in the membrane. It carries out the reaction S-ubiquitinyl-[E2 ubiquitin-conjugating enzyme]-L-cysteine + [acceptor protein]-L-lysine = [E2 ubiquitin-conjugating enzyme]-L-cysteine + N(6)-ubiquitinyl-[acceptor protein]-L-lysine.. The protein operates within protein modification; protein ubiquitination. This chain is RING-H2 finger protein ATL54 (ATL54), found in Arabidopsis thaliana (Mouse-ear cress).